Here is a 529-residue protein sequence, read N- to C-terminus: Bifunctional purine biosynthesis protein PurH (529 aa).

The MGS-like domain maps to 1–148 (MQQRRPVRRA…KNHKDVAIVV (148 aa)). Lys-287 bears the N6-acetyllysine mark.

This sequence belongs to the PurH family.

It catalyses the reaction (6R)-10-formyltetrahydrofolate + 5-amino-1-(5-phospho-beta-D-ribosyl)imidazole-4-carboxamide = 5-formamido-1-(5-phospho-D-ribosyl)imidazole-4-carboxamide + (6S)-5,6,7,8-tetrahydrofolate. The enzyme catalyses IMP + H2O = 5-formamido-1-(5-phospho-D-ribosyl)imidazole-4-carboxamide. Its pathway is purine metabolism; IMP biosynthesis via de novo pathway; 5-formamido-1-(5-phospho-D-ribosyl)imidazole-4-carboxamide from 5-amino-1-(5-phospho-D-ribosyl)imidazole-4-carboxamide (10-formyl THF route): step 1/1. It functions in the pathway purine metabolism; IMP biosynthesis via de novo pathway; IMP from 5-formamido-1-(5-phospho-D-ribosyl)imidazole-4-carboxamide: step 1/1. This is Bifunctional purine biosynthesis protein PurH from Escherichia coli O7:K1 (strain IAI39 / ExPEC).